The chain runs to 356 residues: Methionine import ATP-binding protein MetN (356 aa).

The ABC transporter domain maps to 7 to 250 (IKLDNIDVTF…PRESLTQDFI (244 aa)). 43–50 (GYSGAGKS) serves as a coordination point for ATP.

It belongs to the ABC transporter superfamily. Methionine importer (TC 3.A.1.24) family. The complex is composed of two ATP-binding proteins (MetN), two transmembrane proteins (MetI) and a solute-binding protein (MetQ).

The protein resides in the cell membrane. The catalysed reaction is L-methionine(out) + ATP + H2O = L-methionine(in) + ADP + phosphate + H(+). The enzyme catalyses D-methionine(out) + ATP + H2O = D-methionine(in) + ADP + phosphate + H(+). Functionally, part of the ABC transporter complex MetNIQ involved in methionine import. Responsible for energy coupling to the transport system. This Streptococcus agalactiae serotype Ia (strain ATCC 27591 / A909 / CDC SS700) protein is Methionine import ATP-binding protein MetN.